A 497-amino-acid chain; its full sequence is Pancreatic alpha-amylase (497 aa).

Gln1 carries the pyrrolidone carboxylic acid modification. Intrachain disulfides connect Cys28/Cys86, Cys70/Cys115, and Cys141/Cys160. Residues Asn100, Arg158, and Asp167 each coordinate Ca(2+). Arg195 contributes to the chloride binding site. Asp197 serves as the catalytic Nucleophile. His201 lines the Ca(2+) pocket. Glu233 acts as the Proton donor in catalysis. Positions 298 and 337 each coordinate chloride. Disulfide bonds link Cys379/Cys385 and Cys451/Cys463.

This sequence belongs to the glycosyl hydrolase 13 family. In terms of assembly, monomer. It depends on Ca(2+) as a cofactor. The cofactor is chloride.

It localises to the secreted. Its subcellular location is the extracellular space. It catalyses the reaction Endohydrolysis of (1-&gt;4)-alpha-D-glucosidic linkages in polysaccharides containing three or more (1-&gt;4)-alpha-linked D-glucose units.. This chain is Pancreatic alpha-amylase, found in Struthio camelus (Common ostrich).